A 786-amino-acid polypeptide reads, in one-letter code: Ribosome biogenesis protein BOP1 homolog (786 aa).

A compositionally biased stretch (basic residues) spans 1–11 (MTKKLTIKRKV). Residues 1–161 (MTKKLTIKRK…DSDTSDEEDI (161 aa)) form a disordered region. Acidic residues-rich tracts occupy residues 28–37 (DNEEEEEEDL), 46–55 (EDSTDDEGID), 62–74 (SSEDLEFESDEEG), and 86–103 (SGDDDEESAEDEEEEDDA). The span at 104-113 (DAKKSSKNND) shows a compositional bias: basic and acidic residues. Positions 151–160 (ADSDTSDEED) are enriched in acidic residues. 7 WD repeats span residues 447–488 (GHTD…RTIE), 490–528 (EDVVRCVAWCPNAKLSIIAVATGSRLLLVNPKVGDKLLV), 572–614 (THFK…SQIP), 617–655 (KSKGLIQCVLFHPVKPCFFVATQHNIRIYDLVKQELIKK), 658–697 (TNSKWISGMSIHPKGDNLLVSTYDKKMLWFDLDLSTKPYQ), 701–740 (LHRNAVRSVAFHLRYPLFASGSDDQAVIVSHGMVYNDLLQ), and 756–786 (REEFGVLDVNWHPVQPWVFSTGADCTIRLFT).

Belongs to the WD repeat BOP1/ERB1 family.

The protein localises to the nucleus. It is found in the nucleolus. The protein resides in the nucleoplasm. In terms of biological role, required for maturation of ribosomal RNAs and formation of the large ribosomal subunit. The protein is Ribosome biogenesis protein BOP1 homolog of Drosophila pseudoobscura pseudoobscura (Fruit fly).